A 1982-amino-acid chain; its full sequence is CASP8-associated protein 2 (1982 aa).

Alanine 2 is modified (N-acetylalanine). Serine 20 carries the phosphoserine modification. The segment covering 159–191 has biased composition (basic and acidic residues); sequence VKTKDLKSRSPHLDDCSKTDHRAKSDVSKDVHH. Residues 159 to 552 form a disordered region; it reads VKTKDLKSRS…ESGPNETKNK (394 aa). Serine 194 is subject to Phosphoserine. The segment covering 198-210 has biased composition (basic and acidic residues); the sequence is LEKEGKPHSDKRS. The segment covering 225–240 has biased composition (polar residues); it reads GVWSRSHYQVGEGSSN. A compositionally biased stretch (basic and acidic residues) spans 286–395; it reads GHPEKYGKGE…ERASLPHSKN (110 aa). Residues 396-405 are compositionally biased toward polar residues; sequence EITFSHNSSK. 3 stretches are compositionally biased toward basic and acidic residues: residues 406–423, 444–455, and 463–524; these read YHLEERRGWEDCKRDKSV, KNIDSKEVDAMH, and KAER…KGEV. Serine 567 carries the phosphoserine modification. Residues 569 to 593 are disordered; it reads AKKQPVSQDNQHKITDIPKSSGVCD. Serine 658, serine 815, and serine 875 each carry phosphoserine. Disordered stretches follow at residues 875–1017, 1157–1188, and 1251–1283; these read SPPQ…DKVM, FGRDSDEGKLEKTSKQNAQYSNSQKRSVDNSN, and ERSLEVHCPSTPKSEKNEGSSIEDAQTSQHATL. The span at 894-904 shows a compositional bias: polar residues; it reads SAHSTSKSQSD. Composition is skewed to basic and acidic residues over residues 905–924, 936–965, 999–1016, and 1157–1170; these read LNKENQKPIYKSDKCTEADT, GEIRSDSETSKPQESFEKNSKRRVSADVRK, KRPDKSSRSSKTEKKDKV, and FGRDSDEGKLEKTS. At serine 940 the chain carries Phosphoserine. Position 1161 is a phosphoserine (serine 1161). Composition is skewed to polar residues over residues 1171 to 1181 and 1269 to 1281; these read KQNAQYSNSQK and GSSIEDAQTSQHA. N6-acetyllysine is present on lysine 1343. The short motif at 1683–1687 is the SUMO interaction motif 1 (SIM); mediates the binding to polysumoylated substrates element; the sequence is YVDLT. Positions 1709-1982 are NCOA2-binding; sequence DQLGCSGGNL…MKLFEKSKCR (274 aa). The short motif at 1737-1741 is the SUMO interaction motif 2 (SIM); mediates the binding to polysumoylated substrates element; it reads FIDLT. Residues 1794–1798 carry the SUMO interaction motif 3 (SIM); mediates the binding to polysumoylated substrates motif; sequence YIDLT. Positions 1803-1909 are disordered; that stretch reads SSCEVKKDEL…IKDSSAALAT (107 aa). The span at 1851 to 1865 shows a compositional bias: basic and acidic residues; it reads KETDLTNKEKTKKPT.

In terms of assembly, self-associates. Component of the death-inducing signaling complex (DISC) with CASP8, FADD and FAS. Interacts with NCOA2 and NCOA3. Interacts with SRRT. Interacts with TRAF2. Interacts with NPAT. Interacts (via SIM domains) with SUMO1 and SUMO2. Interacts with SP100; may negatively regulate CASP8AP2 export from the nucleus to the cytoplasm.

The protein localises to the cytoplasm. It is found in the nucleus. The protein resides in the PML body. It localises to the mitochondrion. Its function is as follows. Participates in TNF-alpha-induced blockade of glucocorticoid receptor (GR) transactivation at the nuclear receptor coactivator level, upstream and independently of NF-kappa-B. Suppresses both NCOA2- and NCOA3-induced enhancement of GR transactivation. Involved in TNF-alpha-induced activation of NF-kappa-B via a TRAF2-dependent pathway. Acts as a downstream mediator for CASP8-induced activation of NF-kappa-B. Required for the activation of CASP8 in FAS-mediated apoptosis. Required for histone gene transcription and progression through S phase. This chain is CASP8-associated protein 2, found in Homo sapiens (Human).